The primary structure comprises 390 residues: GTPase Obg (390 aa).

Residues 1 to 159 (MKFVDEASIL…RELLLELMLL (159 aa)) enclose the Obg domain. The interval 127 to 147 (NTRFKSSVNRTPRQKTNGTPG) is disordered. Residues 129 to 145 (RFKSSVNRTPRQKTNGT) show a composition bias toward polar residues. One can recognise an OBG-type G domain in the interval 160–333 (ADVGMLGMPN…LCWDVMTFII (174 aa)). GTP is bound by residues 166–173 (GMPNAGKS), 191–195 (FTTLV), 213–216 (DIPG), 283–286 (NKID), and 314–316 (SAA). Mg(2+) is bound by residues Ser173 and Thr193.

Belongs to the TRAFAC class OBG-HflX-like GTPase superfamily. OBG GTPase family. In terms of assembly, monomer. The cofactor is Mg(2+).

Its subcellular location is the cytoplasm. Its function is as follows. An essential GTPase which binds GTP, GDP and possibly (p)ppGpp with moderate affinity, with high nucleotide exchange rates and a fairly low GTP hydrolysis rate. Plays a role in control of the cell cycle, stress response, ribosome biogenesis and in those bacteria that undergo differentiation, in morphogenesis control. This chain is GTPase Obg, found in Escherichia fergusonii (strain ATCC 35469 / DSM 13698 / CCUG 18766 / IAM 14443 / JCM 21226 / LMG 7866 / NBRC 102419 / NCTC 12128 / CDC 0568-73).